A 59-amino-acid polypeptide reads, in one-letter code: Amyloid-beta precursor protein (59 aa).

The Extracellular portion of the chain corresponds to 1 to 34; the sequence is ISEVKMDAEFRHDSGYEVHHQKLVFFAEDVGSNK. The chain crosses the membrane as a helical span at residues 35 to 58; it reads GAIIGLMVGGVVIATVIVITLVML. Lysine 59 is a topological domain (cytoplasmic).

The protein belongs to the APP family. Binds, via its C-terminus, to the PID domain of several cytoplasmic proteins, including APBB family members, the APBA family, MAPK8IP1, SHC1 and NUMB and DAB1. Binding to DAB1 inhibits its serine phosphorylation. Interacts (via NPXY motif) with DAB2 (via PID domain); the interaction is impaired by tyrosine phosphorylation of the NPXY motif. Also interacts with GPCR-like protein BPP, APPBP1, IB1, KNS2 (via its TPR domains), APPBP2 (via BaSS) and DDB1. In vitro, it binds MAPT via the MT-binding domains. Associates with microtubules in the presence of ATP and in a kinesin-dependent manner. Interacts, through a C-terminal domain, with GNAO1. Interacts with CPEB1, ANKS1B and AGER. Interacts with ITM2B. Interacts with ITM2C. Interacts with IDE. Can form homodimers; dimerization is enhanced in the presence of Cu(2+) ions. Can form homodimers; this is promoted by heparin binding. Interacts with SORL1 (via N-terminal ectodomain); this interaction retains APP in the trans-Golgi network and reduces processing into soluble APP-alpha and amyloid-beta peptides. Interacts with PLD3. Interacts with VDAC1. Interacts with NSG1; could regulate APP processing. Amyloid-beta protein 42 interacts with FPR2. Interacts with LRRK2. Interacts (via cytoplasmic domain) with KIF5B. Interacts (via C-terminus) with APBB2/FE65L1 (via C-terminus). Interacts (via intracellular domain) with APBB3. In terms of processing, proteolytically processed under normal cellular conditions. Cleavage either by alpha-secretase, beta-secretase or theta-secretase leads to generation and extracellular release of soluble APP peptides, S-APP-alpha and S-APP-beta, and the retention of corresponding membrane-anchored C-terminal fragments, C80, C83 and C99. Subsequent processing of C80 and C83 by gamma-secretase yields P3 peptides. This is the major secretory pathway and is non-amyloidogenic. Alternatively, presenilin/nicastrin-mediated gamma-secretase processing of C99 releases the amyloid-beta proteins, amyloid-beta protein 40 and amyloid-beta protein 42, major components of amyloid plaques, and the cytotoxic C-terminal fragments, gamma-CTF(50), gamma-CTF(57) and gamma-CTF(59). PSEN1 cleavage is more efficient with C83 than with C99 as substrate (in vitro). Amyloid-beta protein 40 and Amyloid-beta protein 42 are cleaved by ACE. Many other minor amyloid-beta peptides, amyloid-beta 1-X peptides, are found in cerebral spinal fluid (CSF) including the amyloid-beta X-15 peptides, produced from the cleavage by alpha-secretase.

The protein localises to the cell membrane. It is found in the membrane. It localises to the perikaryon. Its subcellular location is the cell projection. The protein resides in the growth cone. The protein localises to the clathrin-coated pit. It is found in the early endosome. It localises to the cytoplasmic vesicle. Its subcellular location is the secreted. The protein resides in the cell surface. The protein localises to the nucleus. It is found in the cytoplasm. Functions as a cell surface receptor and performs physiological functions on the surface of neurons relevant to neurite growth, neuronal adhesion and axonogenesis. Interaction between APP molecules on neighboring cells promotes synaptogenesis. Involved in cell mobility and transcription regulation through protein-protein interactions. Can promote transcription activation through binding to APBB1-KAT5 and inhibit Notch signaling through interaction with Numb. Couples to apoptosis-inducing pathways such as those mediated by G(o) and JIP. Inhibits G(o)-alpha ATPase activity. Acts as a kinesin I membrane receptor, mediating the axonal transport of beta-secretase and presenilin 1. By acting as a kinesin I membrane receptor, plays a role in axonal anterograde transport of cargo towards synapses in axons. May be involved in copper homeostasis/oxidative stress through copper ion reduction. In vitro, copper-metallated APP induces neuronal death directly or is potentiated through Cu(2+)-mediated low-density lipoprotein oxidation. Can regulate neurite outgrowth through binding to components of the extracellular matrix such as heparin and collagen I and IV. Induces a AGER-dependent pathway that involves activation of p38 MAPK, resulting in internalization of amyloid-beta peptide and mitochondrial dysfunction in cultured cortical neurons. Provides Cu(2+) ions for GPC1 which are required for release of nitric oxide (NO) and subsequent degradation of the heparan sulfate chains on GPC1. This is Amyloid-beta precursor protein (APP) from Bos taurus (Bovine).